The chain runs to 119 residues: Protein TusC (119 aa).

Belongs to the DsrF/TusC family. As to quaternary structure, heterohexamer, formed by a dimer of trimers. The hexameric TusBCD complex contains 2 copies each of TusB, TusC and TusD. The TusBCD complex interacts with TusE.

Its subcellular location is the cytoplasm. Functionally, part of a sulfur-relay system required for 2-thiolation of 5-methylaminomethyl-2-thiouridine (mnm(5)s(2)U) at tRNA wobble positions. This Escherichia coli O157:H7 protein is Protein TusC.